Reading from the N-terminus, the 684-residue chain is Poly(A) RNA polymerase cid14 (684 aa).

3 disordered regions span residues 1–52 (MGKK…DAYD), 64–127 (DQEE…KRGE), and 161–219 (WNSD…QAYE). 5 stretches are compositionally biased toward basic and acidic residues: residues 19–35 (ERTEPLPRRIFKNDKPS), 73–91 (GSKKSRNDNDSEGIRDKGG), 108–127 (DPLEPLEKPDLPEEAIKRGE), 171–186 (SNDKSKNNESLKKSSK), and 199–210 (FFHEANEKSDSN). Residues Asp-298 and Asp-300 each contribute to the Mg(2+) site. 6 residues coordinate ATP: Gly-364, Lys-389, Ser-407, Tyr-408, Asn-492, and Lys-496. The PAP-associated domain maps to 434–492 (NFGVLLLEFLELYGKQFYYDAVGIAVHNGGFYFSKKKMGWLKPNQPYLLSIQDPVDFQN). The segment at 623-684 (GHENFQKQAL…SRAKKIRKRF (62 aa)) is disordered. Positions 628–655 (QKQALTSTGEQSSSNSRANPSKLFNISS) are enriched in polar residues. Acidic residues predominate over residues 656-672 (DDSEDEVPIIEDTTASD).

It belongs to the DNA polymerase type-B-like family. In terms of assembly, heterooligomer. Component of the TRAMP complex composed of at least cid14, mtr4, and air1. Mg(2+) is required as a cofactor. Mn(2+) serves as cofactor.

It is found in the nucleus. Its subcellular location is the nucleolus. It carries out the reaction RNA(n) + ATP = RNA(n)-3'-adenine ribonucleotide + diphosphate. Functionally, required for 3' polyadenylation of the 5.8S and 25S rRNAs as a prelude to their degradation in the exosome. Involved in the nucleolar organization to ensure faithful chromosome segregation during mitosis. The sequence is that of Poly(A) RNA polymerase cid14 (cid14) from Schizosaccharomyces pombe (strain 972 / ATCC 24843) (Fission yeast).